The sequence spans 338 residues: Phosphoribosylformylglycinamidine cyclo-ligase (338 aa).

Belongs to the AIR synthase family.

It localises to the cytoplasm. The catalysed reaction is 2-formamido-N(1)-(5-O-phospho-beta-D-ribosyl)acetamidine + ATP = 5-amino-1-(5-phospho-beta-D-ribosyl)imidazole + ADP + phosphate + H(+). It functions in the pathway purine metabolism; IMP biosynthesis via de novo pathway; 5-amino-1-(5-phospho-D-ribosyl)imidazole from N(2)-formyl-N(1)-(5-phospho-D-ribosyl)glycinamide: step 2/2. The protein is Phosphoribosylformylglycinamidine cyclo-ligase of Thermoplasma volcanium (strain ATCC 51530 / DSM 4299 / JCM 9571 / NBRC 15438 / GSS1).